Here is a 172-residue protein sequence, read N- to C-terminus: Large ribosomal subunit protein uL10 (172 aa).

It belongs to the universal ribosomal protein uL10 family. In terms of assembly, part of the ribosomal stalk of the 50S ribosomal subunit. The N-terminus interacts with L11 and the large rRNA to form the base of the stalk. The C-terminus forms an elongated spine to which L12 dimers bind in a sequential fashion forming a multimeric L10(L12)X complex.

Functionally, forms part of the ribosomal stalk, playing a central role in the interaction of the ribosome with GTP-bound translation factors. This chain is Large ribosomal subunit protein uL10 (rplJ), found in Chlamydia trachomatis serovar D (strain ATCC VR-885 / DSM 19411 / UW-3/Cx).